The following is a 357-amino-acid chain: 4-hydroxyphenylpyruvate dioxygenase (357 aa).

2 consecutive VOC domains span residues Gly-12–Arg-129 and Ile-158–Glu-313. Positions 161, 240, and 322 each coordinate Fe cation.

Belongs to the 4HPPD family. As to quaternary structure, homotetramer. Fe cation serves as cofactor.

It catalyses the reaction 3-(4-hydroxyphenyl)pyruvate + O2 = homogentisate + CO2. It participates in amino-acid degradation; L-phenylalanine degradation; acetoacetate and fumarate from L-phenylalanine: step 3/6. The protein is 4-hydroxyphenylpyruvate dioxygenase (hpd) of Pseudomonas sp. (strain P.J. 874).